A 144-amino-acid chain; its full sequence is Nucleoside diphosphate kinase (144 aa).

ATP contacts are provided by K11, F59, R87, T93, R104, and N114. Residue H117 is the Pros-phosphohistidine intermediate of the active site.

This sequence belongs to the NDK family. As to quaternary structure, homotetramer. It depends on Mg(2+) as a cofactor.

The protein localises to the cytoplasm. It catalyses the reaction a 2'-deoxyribonucleoside 5'-diphosphate + ATP = a 2'-deoxyribonucleoside 5'-triphosphate + ADP. The enzyme catalyses a ribonucleoside 5'-diphosphate + ATP = a ribonucleoside 5'-triphosphate + ADP. Major role in the synthesis of nucleoside triphosphates other than ATP. The ATP gamma phosphate is transferred to the NDP beta phosphate via a ping-pong mechanism, using a phosphorylated active-site intermediate. The chain is Nucleoside diphosphate kinase from Aliivibrio fischeri (strain ATCC 700601 / ES114) (Vibrio fischeri).